Here is a 158-residue protein sequence, read N- to C-terminus: Probable host range protein 2-1 (158 aa).

The protein belongs to the poxviridae C7 protein family.

Plays a role for multiplication of the virus in different cell types. The chain is Probable host range protein 2-1 from Rabbit fibroma virus (strain Kasza) (RFV).